We begin with the raw amino-acid sequence, 503 residues long: Opine oxidase subunit A (503 aa).

It to T-protein and to dimethylglycine dehydrogenase. In terms of assembly, heterodimer of a subunit A and a subunit B.

The protein operates within opine metabolism; octopine degradation. In terms of biological role, oxidative cleavage of octopine into L-arginine and pyruvate. In Agrobacterium tumefaciens (strain Ach5), this protein is Opine oxidase subunit A (ooxA).